The chain runs to 50 residues: uncharacterized protein (50 aa).

A helical membrane pass occupies residues 5–19; that stretch reads IIIIVIVIIIFFFYL. Residues 19 to 50 adopt a coiled-coil conformation; sequence LKQKKLTNCETQVVKVQKDIDEINLKLKKLNK.

The protein localises to the membrane. This is an uncharacterized protein from Acheta domesticus (House cricket).